The chain runs to 724 residues: Protein arginine N-methyltransferase 1.6 (724 aa).

SAM-dependent MTase PRMT-type domains lie at 61–388 and 395–721; these read NDQP…YNLK and HERT…IVTH. Catalysis depends on residues E183 and E192.

It belongs to the class I-like SAM-binding methyltransferase superfamily. Protein arginine N-methyltransferase family. PRMT7 subfamily.

Its function is as follows. Arginine methyltransferase that can both catalyze the formation of omega-N monomethylarginine (MMA) and symmetrical dimethylarginine (sDMA). The polypeptide is Protein arginine N-methyltransferase 1.6 (PRMT16) (Arabidopsis thaliana (Mouse-ear cress)).